The chain runs to 1969 residues: Myosin-3 (1969 aa).

The Myosin N-terminal SH3-like domain occupies 33 to 82 (DSKKNCWIPDPEDGFVAAEIQSTTGEQVTVVTVKGNQITVKKDQCQEMNP). Residues 86–791 (DKTEDMANLT…VLAKLEDLRD (706 aa)) enclose the Myosin motor domain. Residue lysine 130 is modified to N6,N6,N6-trimethyllysine. An ATP-binding site is contributed by 179-186 (GESGAGKT). Actin-binding stretches follow at residues 667–689 (LNNL…IPNE) and 770–784 (KVGE…GVLA). The IQ domain occupies 794 to 823 (LSRIVTMFQSRIRSYLAKAEVRRRYEQQTG). Residues 857-1969 (KEQEAMGELA…IRSSSNARFL (1113 aa)) are a coiled coil. Disordered stretches follow at residues 942-966 (MQER…TKKH), 1006-1029 (NKEK…EEDK), 1131-1213 (LEEE…GDSV), and 1234-1255 (KSKL…VRSR). 2 stretches are compositionally biased toward basic and acidic residues: residues 1137-1164 (AERN…ERLE) and 1176-1197 (ANKK…DSLN).

It belongs to the TRAFAC class myosin-kinesin ATPase superfamily. Myosin family. In terms of assembly, muscle myosin is a hexameric protein that consists of 2 heavy chain subunits (MHC), 2 alkali light chain subunits (MLC) and 2 regulatory light chain subunits (MLC-2). Expressed in body wall muscles, neighboring vulval muscle cells and the contractile sheath covering the hermaphrodite gonad (myoepithelial sheath cells).

The protein localises to the cytoplasm. The protein resides in the myofibril. It localises to the sarcomere. Its subcellular location is the a band. Its function is as follows. Essential for muscle contraction. Involved in ovulation likely by regulating the contraction of gonadal myoepithelial sheath cells. The protein is Myosin-3 (myo-3) of Caenorhabditis elegans.